Here is a 484-residue protein sequence, read N- to C-terminus: Iroquois-class homeodomain protein IRX-5 (484 aa).

Residues 112 to 174 constitute a DNA-binding region (homeobox; TALE-type); it reads DPAYRKNATR…NARRRLKKEN (63 aa). Disordered regions lie at residues 176–393 and 424–443; these read MTWT…QCPF and GHPG…FNGL. The segment covering 185-202 has biased composition (acidic residues); it reads EDEEEEENIDLEKNDEDE. Basic and acidic residues-rich tracts occupy residues 203-212 and 249-265; these read PQKPEDKGDL and SDFK…ELPR. S273 is modified (phosphoserine). Residues 318-328 are compositionally biased toward pro residues; the sequence is SPPPPPPPPPA. Over residues 375-389 the composition is skewed to low complexity; that stretch reads SRASPAPAPARSPSA. S465 carries the post-translational modification Phosphoserine.

It belongs to the TALE/IRO homeobox family. In terms of tissue distribution, not expressed in the developing metanephric kidney or adult kidney.

Its subcellular location is the nucleus. Establishes the cardiac repolarization gradient by its repressive actions on the KCND2 potassium-channel gene. Required for retinal cone bipolar cell differentiation. May regulate contrast adaptation in the retina and control specific aspects of visual function in circuits of the mammalian retina. Involved in craniofacial and gonadal development. Modulates the migration of progenitor cell populations in branchial arches and gonads by repressing CXCL12. The chain is Iroquois-class homeodomain protein IRX-5 (Irx5) from Mus musculus (Mouse).